A 116-amino-acid polypeptide reads, in one-letter code: Large ribosomal subunit protein bL19 (116 aa).

The protein belongs to the bacterial ribosomal protein bL19 family.

Functionally, this protein is located at the 30S-50S ribosomal subunit interface and may play a role in the structure and function of the aminoacyl-tRNA binding site. The chain is Large ribosomal subunit protein bL19 (rplS) from Geobacillus stearothermophilus (Bacillus stearothermophilus).